The following is a 60-amino-acid chain: Large ribosomal subunit protein uL30 (60 aa).

The protein belongs to the universal ribosomal protein uL30 family. In terms of assembly, part of the 50S ribosomal subunit.

In Paraburkholderia phytofirmans (strain DSM 17436 / LMG 22146 / PsJN) (Burkholderia phytofirmans), this protein is Large ribosomal subunit protein uL30.